The following is a 395-amino-acid chain: Flap endonuclease 1 (395 aa).

Positions 1-108 (MGILGLSKLL…DELEMRRQKA (108 aa)) are N-domain. Asp-34 is a binding site for Mg(2+). Arg-74 is a binding site for DNA. Asp-90 contributes to the Mg(2+) binding site. The interval 116–136 (EKAKDAGDDEMMEKMSKRTVR) is disordered. The I-domain stretch occupies residues 126–257 (MMEKMSKRTV…QKAWEGIQRY (132 aa)). Positions 162, 164, 183, and 185 each coordinate Mg(2+). Glu-162 contributes to the DNA binding site. Residues Gly-235 and Asp-237 each contribute to the DNA site. A Mg(2+)-binding site is contributed by Asp-237. The interval 340–348 (TQGRLDSFF) is interaction with PCNA.

This sequence belongs to the XPG/RAD2 endonuclease family. FEN1 subfamily. Interacts with PCNA. Three molecules of FEN1 bind to one PCNA trimer with each molecule binding to one PCNA monomer. PCNA stimulates the nuclease activity without altering cleavage specificity. Requires Mg(2+) as cofactor. Post-translationally, phosphorylated. Phosphorylation upon DNA damage induces relocalization to the nuclear plasma.

Its subcellular location is the nucleus. It localises to the nucleolus. It is found in the nucleoplasm. The protein resides in the mitochondrion. Structure-specific nuclease with 5'-flap endonuclease and 5'-3' exonuclease activities involved in DNA replication and repair. During DNA replication, cleaves the 5'-overhanging flap structure that is generated by displacement synthesis when DNA polymerase encounters the 5'-end of a downstream Okazaki fragment. It enters the flap from the 5'-end and then tracks to cleave the flap base, leaving a nick for ligation. Also involved in the long patch base excision repair (LP-BER) pathway, by cleaving within the apurinic/apyrimidinic (AP) site-terminated flap. Acts as a genome stabilization factor that prevents flaps from equilibrating into structures that lead to duplications and deletions. Also possesses 5'-3' exonuclease activity on nicked or gapped double-stranded DNA, and exhibits RNase H activity. Also involved in replication and repair of rDNA and in repairing mitochondrial DNA. In Leishmania major, this protein is Flap endonuclease 1.